The sequence spans 214 residues: Adenylate kinase (214 aa).

10–15 serves as a coordination point for ATP; it reads GAGKGT. Residues 30-59 form an NMP region; that stretch reads STGDILRAAVKDMTPMGGKAKSFMDAGALV. AMP contacts are provided by residues Thr31, Arg36, 57–59, 85–88, and Gln92; these read ALV and GFPR. The tract at residues 126-163 is LID; it reads GRRTCRNCGKGFHVSFDPPKSSGICDECSGELYQRDDD. Arg127 serves as a coordination point for ATP. Positions 130, 133, 150, and 153 each coordinate Zn(2+). AMP contacts are provided by Arg160 and Arg171. Residue Gly199 coordinates ATP.

The protein belongs to the adenylate kinase family. Monomer.

It localises to the cytoplasm. It catalyses the reaction AMP + ATP = 2 ADP. The protein operates within purine metabolism; AMP biosynthesis via salvage pathway; AMP from ADP: step 1/1. Catalyzes the reversible transfer of the terminal phosphate group between ATP and AMP. Plays an important role in cellular energy homeostasis and in adenine nucleotide metabolism. The sequence is that of Adenylate kinase from Geotalea daltonii (strain DSM 22248 / JCM 15807 / FRC-32) (Geobacter daltonii).